We begin with the raw amino-acid sequence, 89 residues long: UPF0223 protein BcerKBAB4_3787 (89 aa).

It belongs to the UPF0223 family.

The sequence is that of UPF0223 protein BcerKBAB4_3787 from Bacillus mycoides (strain KBAB4) (Bacillus weihenstephanensis).